Consider the following 652-residue polypeptide: Trypanothione synthetase (652 aa).

Residues 34-174 form the Peptidase C51 domain; the sequence is SNKHDHFFSG…QHKDGVWTII (141 aa). ATP is bound at residue 328–330; sequence RFD. 3 residues coordinate Mg(2+): Asp-330, Glu-344, and Asn-346. ATP is bound by residues Lys-513, Lys-548, Gly-555, Gln-583, and 618–620; that span reads IIT.

This sequence in the C-terminal section; belongs to the glutathionylspermidine synthase preATP-grasp family. Mg(2+) is required as a cofactor. In terms of processing, the N-terminus is blocked.

It carries out the reaction spermidine + glutathione + ATP = glutathionylspermidine + ADP + phosphate + H(+). It catalyses the reaction glutathionylspermidine + glutathione + ATP = trypanothione + ADP + phosphate + H(+). Conjugates glutathione (gamma-Glu-Cys-Gly) and glutathionylspermidine to form trypanothione (N(1),N(8)-bis(glutathionyl)spermidine), which is involved in maintaining intracellular thiol redox and in defense against oxidants. In Crithidia fasciculata, this protein is Trypanothione synthetase (TRS).